A 458-amino-acid chain; its full sequence is PH domain-containing protein DDB_G0274775 (458 aa).

A PH domain is found at 15–112; that stretch reads PSDREGWLTK…WMESIKRNLD (98 aa). The tract at residues 111–154 is disordered; the sequence is LDGEGGMKSGGNDIVSSPKINSEPTPKVNQNGSAPEKSSLSSPR. A compositionally biased stretch (polar residues) spans 124-142; that stretch reads IVSSPKINSEPTPKVNQNG. Low complexity predominate over residues 143-154; the sequence is SAPEKSSLSSPR.

The chain is PH domain-containing protein DDB_G0274775 from Dictyostelium discoideum (Social amoeba).